We begin with the raw amino-acid sequence, 202 residues long: ATP-dependent Clp protease proteolytic subunit (202 aa).

Ser101 acts as the Nucleophile in catalysis. The active site involves His126.

Belongs to the peptidase S14 family. In terms of assembly, component of the chloroplastic Clp protease core complex.

It localises to the plastid. The protein localises to the chloroplast stroma. It catalyses the reaction Hydrolysis of proteins to small peptides in the presence of ATP and magnesium. alpha-casein is the usual test substrate. In the absence of ATP, only oligopeptides shorter than five residues are hydrolyzed (such as succinyl-Leu-Tyr-|-NHMec, and Leu-Tyr-Leu-|-Tyr-Trp, in which cleavage of the -Tyr-|-Leu- and -Tyr-|-Trp bonds also occurs).. In terms of biological role, cleaves peptides in various proteins in a process that requires ATP hydrolysis. Has a chymotrypsin-like activity. Plays a major role in the degradation of misfolded proteins. The chain is ATP-dependent Clp protease proteolytic subunit from Buxus microphylla (Littleleaf boxwood).